The following is a 297-amino-acid chain: Homoserine kinase (297 aa).

An ATP-binding site is contributed by 82-92 (PLTRGLGSSAS).

Belongs to the GHMP kinase family. Homoserine kinase subfamily.

It is found in the cytoplasm. The catalysed reaction is L-homoserine + ATP = O-phospho-L-homoserine + ADP + H(+). It participates in amino-acid biosynthesis; L-threonine biosynthesis; L-threonine from L-aspartate: step 4/5. Functionally, catalyzes the ATP-dependent phosphorylation of L-homoserine to L-homoserine phosphate. In Bacillus cereus (strain ZK / E33L), this protein is Homoserine kinase.